Here is a 640-residue protein sequence, read N- to C-terminus: 1-deoxy-D-xylulose-5-phosphate synthase (640 aa).

Thiamine diphosphate-binding positions include histidine 77 and 118–120; that span reads AHA. Aspartate 149 is a Mg(2+) binding site. Thiamine diphosphate is bound by residues 150–151, asparagine 178, tyrosine 287, and glutamate 369; that span reads GS. Residue asparagine 178 coordinates Mg(2+).

This sequence belongs to the transketolase family. DXPS subfamily. In terms of assembly, homodimer. It depends on Mg(2+) as a cofactor. The cofactor is thiamine diphosphate.

It carries out the reaction D-glyceraldehyde 3-phosphate + pyruvate + H(+) = 1-deoxy-D-xylulose 5-phosphate + CO2. The protein operates within metabolic intermediate biosynthesis; 1-deoxy-D-xylulose 5-phosphate biosynthesis; 1-deoxy-D-xylulose 5-phosphate from D-glyceraldehyde 3-phosphate and pyruvate: step 1/1. Catalyzes the acyloin condensation reaction between C atoms 2 and 3 of pyruvate and glyceraldehyde 3-phosphate to yield 1-deoxy-D-xylulose-5-phosphate (DXP). In Caulobacter vibrioides (strain NA1000 / CB15N) (Caulobacter crescentus), this protein is 1-deoxy-D-xylulose-5-phosphate synthase.